Consider the following 243-residue polypeptide: Ras-related protein Rab-12 (243 aa).

An N-acetylmethionine modification is found at Met-1. The disordered stretch occupies residues 1–36; that stretch reads MDPSAALHRRPAGGSLGAVSPALSGGQARRRKQPPR. Ser-15, Ser-20, and Ser-24 each carry phosphoserine. GTP contacts are provided by Gly-51, Val-52, Gly-53, Lys-54, Thr-55, Ser-72, and Thr-73. Residue Thr-55 participates in Mg(2+) binding. 2 short sequence motifs (switch) span residues 64-78 and 96-113; these read DTFCEACKSTVGVDF and DTAGQERFNSITSAYYRS. Thr-73 and Asp-96 together coordinate Mg(2+). Position 99 (Gly-99) interacts with GTP. A Phosphoserine; by LRRK2 modification is found at Ser-105. GTP-binding residues include Asn-154, Lys-155, Asp-157, Ser-185, Ala-186, and Lys-187. S-geranylgeranyl cysteine attachment occurs at residues Cys-242 and Cys-243.

Belongs to the small GTPase superfamily. Rab family. In terms of assembly, interacts with RABIF and OPTN. Interacts with LRRK2; interaction facilitates phosphorylation of Ser-105. Interacts with GDI1, GDI2, CHM and CHML; these interactions are disrupted by phosphorylation on Ser-105. Interacts with RILPL1 and RILPL2; these interactions are dependent on phosphorylation of Ser-105. It depends on Mg(2+) as a cofactor. Phosphorylation of Ser-105 in the switch II region by LRRK2 prevents the association of RAB regulatory proteins, including CHM, CHML and RAB GDP dissociation inhibitors GDI1 and GDI2. Ubiquitously expressed.

The protein resides in the recycling endosome membrane. The protein localises to the lysosome membrane. It localises to the golgi apparatus membrane. Its subcellular location is the cytoplasmic vesicle. It is found in the autophagosome. The enzyme catalyses GTP + H2O = GDP + phosphate + H(+). Regulated by guanine nucleotide exchange factors (GEFs) including DENND3 which promote the exchange of bound GDP for free GTP. Regulated by GTPase activating proteins (GAPs) which increase the GTP hydrolysis activity. Inhibited by GDP dissociation inhibitors (GDIs). The small GTPases Rab are key regulators of intracellular membrane trafficking, from the formation of transport vesicles to their fusion with membranes. Rabs cycle between an inactive GDP-bound form and an active GTP-bound form that is able to recruit to membranes different set of downstream effectors directly responsible for vesicle formation, movement, tethering and fusion. RAB12 may play a role in protein transport from recycling endosomes to lysosomes regulating, for instance, the degradation of the transferrin receptor. Involved in autophagy. The polypeptide is Ras-related protein Rab-12 (Mus musculus (Mouse)).